The sequence spans 1188 residues: Probable RNA helicase armi (1188 aa).

Position 723–730 (723–730 (GPPGSGKT)) interacts with ATP. The DEAG box motif lies at 862–865 (DEAG).

This sequence belongs to the DNA2/NAM7 helicase family. SDE3 subfamily. As to quaternary structure, forms a complex with piwi and fs(1)Yb; this interaction is required for proper piRNA loading and nuclear localization of piwi. The interaction of piwi and fs(1)Yb is likely to occur via armi. In terms of tissue distribution, abundant in oocytes and syncytial blastoderm. Expressed at low level throughout development, including somatic tissues. First apparent early in oogenesis, in the cytoplasm of stem cells and mitotically dividing cystoblasts. In regions 2a and 2b of the germarium, it is most concentrated in the center of the germline cysts, where the pro-oocyte is located. In stage 1 and early stage 2 egg chambers, it accumulates at the anterior of the oocyte, near the ring canals. It also extends through the ring canals forming a branched structure that links the early oocyte with adjacent nurse cells. In stage 3 cysts, it accumulates at the posterior cortex and localizes to extensions that pass through the oocyte into the nurse cells. Through stages 4 to 7, it continues to be somewhat enriched at the posterior cortex of the oocyte, but at significantly lower level. In stage 9 to 10 egg chambers, it is found throughout the cytoplasm of the oocyte and nurse cells, with slight enrichment at the oocyte cortex.

The protein localises to the cytoplasm. The catalysed reaction is ATP + H2O = ADP + phosphate + H(+). Its function is as follows. Probable RNA helicase required for axial polarization of the oocyte during early and mid oogenesis. Plays a central role in RNA interference (RNAi) process, a process that mediates mRNA destruction of translational repression. Required for the assembly of the RISC complex, a complex required for target RNA destruction or repression. May be required in the RISC assembly to unwind miRNAs, in the production of single-stranded miRNA from the double-stranded miRNA, a key step in RISC formation. Required both for the translational control of oskar (osk) mRNA and cytoskeletal polarization in the oocyte. Required for somatic primary piRNA biogenesis. Involved in repression of long interspersed nuclear elements (LINEs) including HeT-A, I-element and TART LINEs. The sequence is that of Probable RNA helicase armi from Drosophila melanogaster (Fruit fly).